A 499-amino-acid chain; its full sequence is Dual specificity protein kinase CLK2 (499 aa).

Positions 1 to 65 (MPHPRRYHSS…RSSYDDHSSD (65 aa)) are disordered. Residues 8-23 (HSSERGSRGSYHEHYQ) show a composition bias toward basic and acidic residues. The segment covering 24–33 (SRKHKRRRSR) has biased composition (basic residues). Serine 34 carries the post-translational modification Phosphoserine; by PKB/AKT1. Residues 47–65 (REDSYHVRSRSSYDDHSSD) are compositionally biased toward basic and acidic residues. Serine 98 carries the post-translational modification Phosphoserine; by autocatalysis. Residue tyrosine 99 is modified to Phosphotyrosine; by autocatalysis. Residues 102 to 142 (HRENSSYRSQRSSRRKHRRRRRRSRTFSRSSSHSSRRAKSV) form a disordered region. A compositionally biased stretch (basic residues) spans 112 to 127 (RSSRRKHRRRRRRSRT). Position 127 is a phosphothreonine; by PKB/AKT1 (threonine 127). At serine 141 the chain carries Phosphoserine; by autocatalysis. Tyrosine 152 bears the Phosphotyrosine mark. One can recognise a Protein kinase domain in the interval 163–479 (EIVSTLGEGT…GEALQHPFFA (317 aa)). Residues 168-176 (LGEGTFGRV) and lysine 192 contribute to the ATP site. The active-site Proton acceptor is aspartate 289. Threonine 343 is subject to Phosphothreonine; by PKB/AKT2.

It belongs to the protein kinase superfamily. CMGC Ser/Thr protein kinase family. Lammer subfamily. In terms of assembly, interacts with RBMX and UBL5. Interacts with AKT1. Autophosphorylates on all three types of residues. Phosphorylation on Ser-34 and Thr-127 by AKT1 is induced by ionizing radiation or insulin. Phosphorylation plays a critical role in cell proliferation following low dose radiation and prevents cell death following high dose radiation. Phosphorylation at Thr-343 by PKB/AKT2 induces its kinase activity which is required for its stability. The phosphorylation status at Ser-141 influences its subnuclear localization; inhibition of phosphorylation at Ser-141 results in accumulation in the nuclear speckle.

Its subcellular location is the nucleus. The protein resides in the nucleus speckle. The catalysed reaction is L-seryl-[protein] + ATP = O-phospho-L-seryl-[protein] + ADP + H(+). The enzyme catalyses L-threonyl-[protein] + ATP = O-phospho-L-threonyl-[protein] + ADP + H(+). It catalyses the reaction L-tyrosyl-[protein] + ATP = O-phospho-L-tyrosyl-[protein] + ADP + H(+). 5,6-dichloro-1-b-D-ribofuranosylbenzimidazole (DRB) inhibits autophosphorylation. TG003 inhibits its kinase activity and affects the regulation of alternative splicing mediated by phosphorylation of SR proteins. Functionally, dual specificity kinase acting on both serine/threonine and tyrosine-containing substrates. Phosphorylates serine- and arginine-rich (SR) proteins of the spliceosomal complex. May be a constituent of a network of regulatory mechanisms that enable SR proteins to control RNA splicing and can cause redistribution of SR proteins from speckles to a diffuse nucleoplasmic distribution. Acts as a suppressor of hepatic gluconeogenesis and glucose output by repressing PPARGC1A transcriptional activity on gluconeogenic genes via its phosphorylation. Phosphorylates PPP2R5B thereby stimulating the assembly of PP2A phosphatase with the PPP2R5B-AKT1 complex leading to dephosphorylation of AKT1. Phosphorylates: PTPN1, SRSF1 and SRSF3. Regulates the alternative splicing of tissue factor (F3) pre-mRNA in endothelial cells. Phosphorylates PAGE4 at several serine and threonine residues and this phosphorylation attenuates the ability of PAGE4 to potentiate the transcriptional activator activity of JUN. This chain is Dual specificity protein kinase CLK2 (Clk2), found in Mus musculus (Mouse).